A 335-amino-acid chain; its full sequence is Probable deoxyhypusine synthase (335 aa).

Lys308 serves as the catalytic Nucleophile.

This sequence belongs to the deoxyhypusine synthase family. Requires NAD(+) as cofactor.

It catalyses the reaction [eIF5A protein]-L-lysine + spermidine = [eIF5A protein]-deoxyhypusine + propane-1,3-diamine. It functions in the pathway protein modification; eIF5A hypusination. In terms of biological role, catalyzes the NAD-dependent oxidative cleavage of spermidine and the subsequent transfer of the butylamine moiety of spermidine to the epsilon-amino group of a specific lysine residue of the eIF-5A precursor protein to form the intermediate deoxyhypusine residue. In Thermococcus onnurineus (strain NA1), this protein is Probable deoxyhypusine synthase.